The following is a 412-amino-acid chain: Multifunctional CCA protein (412 aa).

ATP-binding residues include Gly8 and Arg11. Residues Gly8 and Arg11 each coordinate CTP. Asp21 and Asp23 together coordinate Mg(2+). ATP-binding residues include Arg91, Arg137, and Arg140. Arg91, Arg137, and Arg140 together coordinate CTP. An HD domain is found at 228-329 (TGIHTLMTLS…VKLFDSIDAW (102 aa)).

Belongs to the tRNA nucleotidyltransferase/poly(A) polymerase family. Bacterial CCA-adding enzyme type 1 subfamily. Monomer. Can also form homodimers and oligomers. The cofactor is Mg(2+). Ni(2+) is required as a cofactor.

It catalyses the reaction a tRNA precursor + 2 CTP + ATP = a tRNA with a 3' CCA end + 3 diphosphate. The enzyme catalyses a tRNA with a 3' CCA end + 2 CTP + ATP = a tRNA with a 3' CCACCA end + 3 diphosphate. Functionally, catalyzes the addition and repair of the essential 3'-terminal CCA sequence in tRNAs without using a nucleic acid template. Adds these three nucleotides in the order of C, C, and A to the tRNA nucleotide-73, using CTP and ATP as substrates and producing inorganic pyrophosphate. tRNA 3'-terminal CCA addition is required both for tRNA processing and repair. Also involved in tRNA surveillance by mediating tandem CCA addition to generate a CCACCA at the 3' terminus of unstable tRNAs. While stable tRNAs receive only 3'-terminal CCA, unstable tRNAs are marked with CCACCA and rapidly degraded. This Escherichia coli (strain K12 / MC4100 / BW2952) protein is Multifunctional CCA protein.